Consider the following 359-residue polypeptide: Peptide chain release factor 1 (359 aa).

An N5-methylglutamine modification is found at glutamine 235. Residues 283–309 (QKAESERSQARRSQVGSGDRSERIRTY) are disordered.

The protein belongs to the prokaryotic/mitochondrial release factor family. Methylated by PrmC. Methylation increases the termination efficiency of RF1.

The protein localises to the cytoplasm. Peptide chain release factor 1 directs the termination of translation in response to the peptide chain termination codons UAG and UAA. The chain is Peptide chain release factor 1 from Brucella suis (strain ATCC 23445 / NCTC 10510).